A 203-amino-acid chain; its full sequence is Akirin-2 (203 aa).

2 positions are modified to phosphoserine: serine 18 and serine 21. Positions 22–27 (PKRRRC) match the Nuclear localization signal motif. Serine 57 is modified (phosphoserine). The SYVS motif signature appears at 200–203 (SYVS).

The protein belongs to the akirin family. Homodimer. Interacts with IPO9; the interaction is direct. Associates with 20S and 26S proteasomes. Interacts with SMARCD1; promoting SWI/SNF complex recruitment. Interacts with NFKBIZ. Interacts with YWHAB. Post-translationally, polyubiquitinated. Polyubiquitination is dependent of UBR5 that extends pre-ubiquitinated AKIRIN2. In terms of tissue distribution, widely expressed. Most abundant in the lung, followed by the skeletal muscle, heart, liver, fat, thymus, lymph node, small intestine, kidney and spleen. In skeletal muscle, expressed at higher level in fast extensor digitorum longus (EDL) and longissimus lumborum (LL) muscles than in slow soleus (SOL) muscles.

The protein localises to the nucleus. It localises to the cytoplasm. The protein resides in the membrane. Molecular adapter that acts as a bridge between a variety of multiprotein complexes, and which is involved in embryonic development, immunity, myogenesis and brain development. Plays a key role in nuclear protein degradation by promoting import of proteasomes into the nucleus: directly binds to fully assembled 20S proteasomes at one end and to nuclear import receptor IPO9 at the other end, bridging them together and mediating the import of pre-assembled proteasome complexes through the nuclear pore. Involved in innate immunity by regulating the production of interleukin-6 (IL6) downstream of Toll-like receptor (TLR): acts by bridging the NF-kappa-B inhibitor NFKBIZ and the SWI/SNF complex, leading to promote induction of IL6. Also involved in adaptive immunity by promoting B-cell activation. Involved in brain development: required for the survival and proliferation of cerebral cortical progenitor cells. Involved in myogenesis: required for skeletal muscle formation and skeletal development, possibly by regulating expression of muscle differentiation factors. The polypeptide is Akirin-2 (Sus scrofa (Pig)).